We begin with the raw amino-acid sequence, 447 residues long: Alkylglycerol monooxygenase (447 aa).

Transmembrane regions (helical) follow at residues 43 to 63 (ATPF…ILKG) and 111 to 131 (WDST…YYWF). The Fatty acid hydroxylase domain occupies 119–249 (FTFLGVDFGY…LIIWDRIFGT (131 aa)). A Histidine box-1 motif is present at residues 132–136 (HRMAH). The Histidine box-2 motif lies at 145–149 (HQAHH). The chain crosses the membrane as a helical span at residues 170–190 (SWVFYCPLALFIPPSVFAVHI). Residues 221-225 (HRVHH) carry the Histidine box-3 motif. The next 3 membrane-spanning stretches (helical) occupy residues 340 to 360 (VLQF…TAVL), 363 to 383 (VTLL…GFLL), and 413 to 433 (IPSL…FWGV).

Belongs to the sterol desaturase family. TMEM195 subfamily. Fe cation serves as cofactor. As to expression, highly expressed in lever and small intestine.

It is found in the endoplasmic reticulum membrane. It catalyses the reaction 1-O-(1,2-saturated-alkyl)-sn-glycerol + (6R)-L-erythro-5,6,7,8-tetrahydrobiopterin + O2 = a 1-(1-hydroxyalkyl)-sn-glycerol + (6R)-L-erythro-6,7-dihydrobiopterin + H2O. Its function is as follows. Glyceryl-ether monooxygenase that cleaves the O-alkyl bond of ether lipids. Ether lipids are essential components of brain membranes. The chain is Alkylglycerol monooxygenase (Agmo) from Mus musculus (Mouse).